The following is a 226-amino-acid chain: Orotate phosphoribosyltransferase 1 (226 aa).

Lys-30 lines the 5-phospho-alpha-D-ribose 1-diphosphate pocket. 38-39 (FF) lines the orotate pocket. 5-phospho-alpha-D-ribose 1-diphosphate contacts are provided by residues 76-77 (YK), Arg-106, Lys-107, Lys-110, His-112, and 132-140 (DDVMTAGTA). Orotate contacts are provided by Thr-136 and Arg-164. Residues Ser-213 and Ser-225 each carry the phosphoserine modification.

This sequence belongs to the purine/pyrimidine phosphoribosyltransferase family. PyrE subfamily. Homodimer.

The enzyme catalyses orotidine 5'-phosphate + diphosphate = orotate + 5-phospho-alpha-D-ribose 1-diphosphate. It functions in the pathway pyrimidine metabolism; UMP biosynthesis via de novo pathway; UMP from orotate: step 1/2. Catalyzes the transfer of a ribosyl phosphate group from 5-phosphoribose 1-diphosphate to orotate, leading to the formation of orotidine monophosphate (OMP). The sequence is that of Orotate phosphoribosyltransferase 1 (URA5) from Saccharomyces cerevisiae (strain ATCC 204508 / S288c) (Baker's yeast).